Reading from the N-terminus, the 112-residue chain is Inner membrane assembly complex subunit 17 (112 aa).

A mitochondrion-targeting transit peptide spans 1–24 (MLRKLPINFAKWTVKKVPVQQKRF). Topologically, residues 25–44 (NSQQKEISPHIMFYKNYARP) are mitochondrial matrix. The helical transmembrane segment at 45–62 (LGKVTLFALATYYGLEIV) threads the bilayer. The Mitochondrial intermembrane portion of the chain corresponds to 63 to 112 (WWKLDASEQEAIKNSKLLICESSFSLLTFRRITEFRECEIKTRDLYDPEI).

The protein belongs to the INA17 family. In terms of assembly, component of the inner membrane assembly (INA) complex. Interacts with a subset of F(1)F(0)-ATP synthase subunits of the F(1)-domain and the peripheral stalk.

The protein resides in the mitochondrion inner membrane. Functionally, component of the INA complex (INAC) that promotes the biogenesis of mitochondrial F(1)F(0)-ATP synthase. INAC facilitates the assembly of the peripheral stalk and promotes the assembly of the catalytic F(1)-domain with the membrane-embedded F(0)-domain. The protein is Inner membrane assembly complex subunit 17 of Schizosaccharomyces pombe (strain 972 / ATCC 24843) (Fission yeast).